The primary structure comprises 340 residues: uncharacterized protein (340 aa).

A run of 2 helical transmembrane segments spans residues 162-182 (PLVP…VLAG) and 239-259 (FWIS…IVVP).

It localises to the cell membrane. This is an uncharacterized protein from Mycobacterium bovis (strain ATCC BAA-935 / AF2122/97).